The following is a 282-amino-acid chain: Armadillo repeat-containing protein 1 (282 aa).

Met1 carries the N-acetylmethionine modification. One copy of the ARM repeat lies at 39-81 (GCLPGLILSMDHPNPPVVHSALLALRYLAECRANREKMKGELG). Residue Thr137 is modified to Phosphothreonine. Residues Ser189, Ser246, Ser260, and Ser267 each carry the phosphoserine modification. Residues 239-261 (DYLPEDESPTKEQDKAVSRVGSH) form a disordered region. A compositionally biased stretch (basic and acidic residues) spans 246–255 (SPTKEQDKAV).

Interacts with mitochondrial contact site and cristae organizing system (MICOS) complex components IMMT/MIC60 and MICOS10/MIC10. Interacts with mitochondrial outer membrane sorting assembly machinery (SAM) complex components SAMM50 and MTX1.

The protein localises to the cytoplasm. It localises to the mitochondrion. The protein resides in the mitochondrion outer membrane. In association with mitochondrial contact site and cristae organizing system (MICOS) complex components and mitochondrial outer membrane sorting assembly machinery (SAM) complex components may regulate mitochondrial dynamics playing a role in determining mitochondrial length, distribution and motility. This chain is Armadillo repeat-containing protein 1 (ARMC1), found in Pongo abelii (Sumatran orangutan).